The sequence spans 72 residues: Large ribosomal subunit protein uL29 (72 aa).

The protein belongs to the universal ribosomal protein uL29 family.

This is Large ribosomal subunit protein uL29 from Prochlorococcus marinus (strain MIT 9515).